The following is a 178-amino-acid chain: S-alkylcysteine N-acetyltransferase (178 aa).

Residues 4-163 (DIFRLATVED…IGVMMHKVLI (160 aa)) enclose the N-acetyltransferase domain.

This sequence belongs to the acetyltransferase family.

It carries out the reaction an S-substituted L-cysteine + acetyl-CoA = an N-acetyl-L-cysteine-S-conjugate + CoA + H(+). The enzyme catalyses S-benzyl-L-cysteine + acetyl-CoA = N-acetyl-S-benzyl-L-cysteine + CoA + H(+). It catalyses the reaction S-methyl-L-cysteine + acetyl-CoA = N-acetyl-S-methyl-L-cysteine + CoA + H(+). It participates in amino-acid metabolism. Involved in a cysteine salvage pathway from S-alkylcysteine. Catalyzes the first step in this pathway, i.e. the amine acetylation of an S-alkylcysteine with a preference for S-benzyl-L-cysteine over S-methyl-L-cysteine. This pathway is likely important in the catabolism of alkylated cysteine generated by proteolysis of alkylated glutathione formed in the detoxification of a wide range of electrophiles. This Bacillus subtilis (strain 168) protein is S-alkylcysteine N-acetyltransferase.